We begin with the raw amino-acid sequence, 369 residues long: Anhydro-N-acetylmuramic acid kinase (369 aa).

12–19 (GTSLDGVD) contributes to the ATP binding site.

The protein belongs to the anhydro-N-acetylmuramic acid kinase family.

It carries out the reaction 1,6-anhydro-N-acetyl-beta-muramate + ATP + H2O = N-acetyl-D-muramate 6-phosphate + ADP + H(+). The protein operates within amino-sugar metabolism; 1,6-anhydro-N-acetylmuramate degradation. Its pathway is cell wall biogenesis; peptidoglycan recycling. Catalyzes the specific phosphorylation of 1,6-anhydro-N-acetylmuramic acid (anhMurNAc) with the simultaneous cleavage of the 1,6-anhydro ring, generating MurNAc-6-P. Is required for the utilization of anhMurNAc either imported from the medium or derived from its own cell wall murein, and thus plays a role in cell wall recycling. This is Anhydro-N-acetylmuramic acid kinase from Escherichia coli (strain SMS-3-5 / SECEC).